The following is a 258-amino-acid chain: UPF0246 protein PM0066 (258 aa).

It belongs to the UPF0246 family.

This is UPF0246 protein PM0066 from Pasteurella multocida (strain Pm70).